A 929-amino-acid polypeptide reads, in one-letter code: Chaperone protein ClpC1, chloroplastic (929 aa).

The transit peptide at 1-38 (MAMATRVLAQSTPPSLACYQRNVPSRGSGRSRRSVKMM) directs the protein to the chloroplast. The 143-residue stretch at 95 to 237 (FERFTEKAIK…RTQVIRMVGE (143 aa)) folds into the Clp R domain. Repeat stretches follow at residues 98 to 163 (FTEK…IGRG) and 173 to 237 (FTPR…MVGE). Residues 257 to 504 (LEEYGTNLTK…RVRLRHAQVP (248 aa)) are i. 302–309 (GEPGVGKT) lines the ATP pocket. The UVR domain maps to 511–546 (EKELRQITKEKNEAVRGQDFEKAGTLRDREIELRAE). Residues 552 to 571 (AKGKEMSKAESETGEEGPMV) are disordered. Residues 553–562 (KGKEMSKAES) show a composition bias toward basic and acidic residues. The II stretch occupies residues 571–762 (VTESDIQHIV…LLIMTSNVGS (192 aa)). An ATP-binding site is contributed by 645 to 652 (GPTGVGKS). A compositionally biased stretch (polar residues) spans 908–919 (LNGGSGTPTTSL). Residues 908–929 (LNGGSGTPTTSLEEQEDSLPVA) form a disordered region. The segment covering 920–929 (EEQEDSLPVA) has biased composition (acidic residues).

It belongs to the ClpA/ClpB family. ClpC subfamily. Homodimer. May form hexamer and interact with Clp core. Interacts (via N-terminus) with CLPS1. Interacts with CLPF. In terms of tissue distribution, highly expressed in rosette leaves. Expressed in roots, stems and inflorescences. Expressed in photosynthetic green tissues with high levels in young, developing leaf tissues.

It localises to the plastid. Its subcellular location is the chloroplast stroma. It is found in the chloroplast membrane. Its function is as follows. Molecular chaperone that hydrolyzes ATP and is associated with the chloroplast protein import apparatus. May function as the motor for chloroplast protein translocation, as translocation requires ATP hydrolysis in the stroma. May interact with a ClpP-like protease involved in degradation of denatured proteins in the chloroplast. Involved in the regulation of chlorophyll b biosynthesis through the destabilization of chlorophyllide a oxygenase (CAO) protein in response to the accumulation of chlorophyll b. Involved in leaf iron homeostasis. The protein is Chaperone protein ClpC1, chloroplastic of Arabidopsis thaliana (Mouse-ear cress).